A 373-amino-acid chain; its full sequence is 4-hydroxy-3-methylbut-2-en-1-yl diphosphate synthase (flavodoxin) (373 aa).

[4Fe-4S] cluster contacts are provided by Cys269, Cys272, Cys304, and Glu311.

Belongs to the IspG family. It depends on [4Fe-4S] cluster as a cofactor.

It carries out the reaction (2E)-4-hydroxy-3-methylbut-2-enyl diphosphate + oxidized [flavodoxin] + H2O + 2 H(+) = 2-C-methyl-D-erythritol 2,4-cyclic diphosphate + reduced [flavodoxin]. It functions in the pathway isoprenoid biosynthesis; isopentenyl diphosphate biosynthesis via DXP pathway; isopentenyl diphosphate from 1-deoxy-D-xylulose 5-phosphate: step 5/6. In terms of biological role, converts 2C-methyl-D-erythritol 2,4-cyclodiphosphate (ME-2,4cPP) into 1-hydroxy-2-methyl-2-(E)-butenyl 4-diphosphate. The chain is 4-hydroxy-3-methylbut-2-en-1-yl diphosphate synthase (flavodoxin) from Baumannia cicadellinicola subsp. Homalodisca coagulata.